The primary structure comprises 761 residues: Ribonucleoside-diphosphate reductase subunit alpha (761 aa).

One can recognise an ATP-cone domain in the interval 5 to 95 (LFVTKRNGKI…IFHLRKKAFG (91 aa)). Residues lysine 9, 15–21 (ELINLDK), threonine 55, and lysine 91 contribute to the ATP site. A GDP-binding site is contributed by threonine 209. Cysteine 225 and cysteine 462 are joined by a disulfide. DTTP-binding positions include 232 to 234 (DNL), arginine 262, and arginine 269. Asparagine 437 provides a ligand contact to GDP. The active-site Proton acceptor is asparagine 437. The active-site Cysteine radical intermediate is cysteine 439. Residues glutamate 441 and 623 to 625 (ETS) contribute to the GDP site. The Proton acceptor role is filled by glutamate 441.

Belongs to the ribonucleoside diphosphate reductase large chain family. As to quaternary structure, tetramer of two alpha and two beta subunits.

The catalysed reaction is a 2'-deoxyribonucleoside 5'-diphosphate + [thioredoxin]-disulfide + H2O = a ribonucleoside 5'-diphosphate + [thioredoxin]-dithiol. Its activity is regulated as follows. Under complex allosteric control mediated by deoxynucleoside triphosphates and ATP binding to separate specificity and activation sites on the alpha subunit. The type of nucleotide bound at the specificity site determines substrate preference. It seems probable that ATP makes the enzyme reduce CDP and UDP, dGTP favors ADP reduction and dTTP favors GDP reduction. Stimulated by ATP and inhibited by dATP binding to the activity site. Functionally, provides the precursors necessary for DNA synthesis. Catalyzes the biosynthesis of deoxyribonucleotides from the corresponding ribonucleotides. In Buchnera aphidicola subsp. Baizongia pistaciae (strain Bp), this protein is Ribonucleoside-diphosphate reductase subunit alpha (nrdA).